The sequence spans 37 residues: Photosystem II reaction center protein M (37 aa).

Residues 5 to 25 form a helical membrane-spanning segment; that stretch reads ILAFIATALFILVPTAFLLII.

It belongs to the PsbM family. PSII is composed of 1 copy each of membrane proteins PsbA, PsbB, PsbC, PsbD, PsbE, PsbF, PsbH, PsbI, PsbJ, PsbK, PsbL, PsbM, PsbT, PsbX, PsbY, PsbZ, Psb30/Ycf12, at least 3 peripheral proteins of the oxygen-evolving complex and a large number of cofactors. It forms dimeric complexes.

Its subcellular location is the plastid. The protein localises to the chloroplast thylakoid membrane. In terms of biological role, one of the components of the core complex of photosystem II (PSII). PSII is a light-driven water:plastoquinone oxidoreductase that uses light energy to abstract electrons from H(2)O, generating O(2) and a proton gradient subsequently used for ATP formation. It consists of a core antenna complex that captures photons, and an electron transfer chain that converts photonic excitation into a charge separation. This subunit is found at the monomer-monomer interface. The sequence is that of Photosystem II reaction center protein M from Pelargonium hortorum (Common geranium).